The primary structure comprises 2002 residues: [F-actin]-monooxygenase MICAL3 (2002 aa).

Residues 2-494 are monooxygenase domain; sequence EERKHETMNP…RHLYDTGETK (493 aa). Residues Cys97, 116–118, 123–125, Phe183, Tyr298, and Asp398 contribute to the FAD site; these read EKR and RNN. Residues 518-624 form the Calponin-homology (CH) domain; that stretch reads VARSSKLLGW…YLTQFYEMFK (107 aa). Ser649 is subject to Phosphoserine. The interval 658 to 706 is disordered; sequence GQTISRKRSPKDKKEKDLDGAGKRRKTSQSEEEEAPRGHRGERPTLVST. The Nuclear localization signal motif lies at 663–684; sequence RKRSPKDKKEKDLDGAGKRRKT. Basic and acidic residues predominate over residues 669–679; the sequence is DKKEKDLDGAG. Ser685 and Ser687 each carry phosphoserine. In terms of domain architecture, LIM zinc-binding spans 762–824; the sequence is DTCYFCQKRV…KPHYCYRLSG (63 aa). Zn(2+) is bound by residues Cys764, Cys767, His785, Cys788, Cys791, Cys794, Cys814, and His817. Residues 835 to 883 form a disordered region; the sequence is PLSGKEAKGPLQDGATTDANGRANAVASSTERTPGSGVNGLEEPSIAKR. Thr887 carries the phosphothreonine modification. 3 disordered regions span residues 907–1313, 1335–1776, and 1791–1821; these read QEVP…SPLA, RRSL…GKHR, and LSFS…TYTE. Over residues 938–950 the composition is skewed to acidic residues; sequence SEMEEEGEEEEEE. Residue Ser977 is modified to Phosphoserine. Over residues 991 to 1017 the composition is skewed to acidic residues; it reads NEEEEEEEEEYEEEEEEDYDEEEEESS. The span at 1041-1054 shows a compositional bias: basic and acidic residues; sequence HWTHIREREEEERM. Residues 1055–1066 are compositionally biased toward low complexity; sequence APASESSASGAP. Positions 1068-1102 are enriched in acidic residues; the sequence is DENDLEEDVDSEPAEIEGEAAEDGDPGDTGAELDD. A phosphoserine mark is found at Ser1134, Ser1143, Ser1160, and Ser1192. The span at 1150 to 1163 shows a compositional bias: polar residues; that stretch reads GPSQATSPIRSPQE. Residues 1191–1218 are compositionally biased toward basic and acidic residues; the sequence is KSPEERLFPEPLLPKEKPKADAPSDLKA. Residues 1239–1258 show a composition bias toward pro residues; sequence PGSPQPQPPVAASTPPPSPL. Polar residues-rich tracts occupy residues 1268–1280 and 1288–1302; these read TEAT…QSPI and KTST…QSQS. A Phosphoserine modification is found at Ser1274. Residue Thr1276 is modified to Phosphothreonine. Phosphoserine is present on Ser1278. A phosphoserine mark is found at Ser1310 and Ser1337. Thr1341 carries the phosphothreonine modification. Phosphoserine occurs at positions 1371 and 1384. Residues 1407 to 1422 show a composition bias toward basic and acidic residues; that stretch reads PSDRELRSAQEERREL. The span at 1423–1435 shows a compositional bias: low complexity; it reads SSSSGLGLHGSSS. Ser1433 bears the Phosphoserine mark. Polar residues predominate over residues 1436–1451; sequence NMKTLGSQSFNTSDSA. A Phosphothreonine modification is found at Thr1454. A compositionally biased stretch (pro residues) spans 1456 to 1467; it reads PSSPPPPPPPGE. Over residues 1516–1530 the composition is skewed to acidic residues; that stretch reads SVEEIPFADDVEDTY. Positions 1588 to 1604 are enriched in basic and acidic residues; the sequence is EAKELAEERMRAREKSV. Residue Ser1649 is modified to Phosphoserine. Thr1651 carries the phosphothreonine modification. Residues 1657-1668 are compositionally biased toward basic and acidic residues; sequence GSEEPTLKHEAT. Low complexity predominate over residues 1674-1694; sequence SPPSDSGGPDGSFTSSEGSSG. Residues 1695 to 1713 are compositionally biased toward basic residues; sequence KSKKRSSLFSPRRNKKEKK. A phosphoserine mark is found at Ser1701 and Ser1704. Over residues 1760–1769 the composition is skewed to polar residues; it reads CPSTPSSGAT. Basic and acidic residues predominate over residues 1804-1820; sequence VLEKSSQKSRREPRTYT. A coiled-coil region spans residues 1821 to 1992; it reads EEELNAKLTR…EEDKDLEAAM (172 aa). In terms of domain architecture, bMERB spans 1841-1990; the sequence is KQEELKRLHR…EREEDKDLEA (150 aa). Ser1912 is subject to Phosphoserine.

It belongs to the Mical family. Interacts with RAB1B, RAB8A, RAB10, RAB13 and RAB15 (in their GTP-bound forms); binding to RAB1B is of low affinity compared to other Rab proteins; at least in case of RAB8A can bind 2 molecules of RAB8A simultaneously through a high and a low affinity binding site, respectively. Interacts with ERC1 and RAB8A; may bridge ERC1 with RAB8A. Interacts with KIF23 and ERC1; enhances the interaction between KIF23 and ERC1. Interacts with NINL isoform 2. The cofactor is FAD. Ubiquitous.

It localises to the cytoplasm. The protein resides in the cell cortex. Its subcellular location is the cytoskeleton. The protein localises to the nucleus. It is found in the midbody. It localises to the spindle. The protein resides in the cilium basal body. The enzyme catalyses L-methionyl-[F-actin] + NADPH + O2 + H(+) = L-methionyl-(R)-S-oxide-[F-actin] + NADP(+) + H2O. In terms of biological role, monooxygenase that promotes depolymerization of F-actin by mediating oxidation of specific methionine residues on actin to form methionine-sulfoxide, resulting in actin filament disassembly and preventing repolymerization. In the absence of actin, it also functions as a NADPH oxidase producing H(2)O(2). Seems to act as Rab effector protein and plays a role in vesicle trafficking. Involved in exocytic vesicles tethering and fusion: the monooxygenase activity is required for this process and implicates RAB8A associated with exocytotic vesicles. Required for cytokinesis. Contributes to stabilization and/or maturation of the intercellular bridge independently of its monooxygenase activity. Promotes recruitment of Rab8 and ERC1 to the intercellular bridge, and together these proteins are proposed to function in timely abscission. This Homo sapiens (Human) protein is [F-actin]-monooxygenase MICAL3 (MICAL3).